Reading from the N-terminus, the 263-residue chain is Phosphoinositide-3-kinase-interacting protein 1 (263 aa).

Residues 1 to 21 form the signal peptide; sequence MLLAWVQAFLVSNMLLAEAYG. Over 22-168 the chain is Extracellular; that stretch reads SGGCFWDNGH…NSKEKKDLGT (147 aa). The Kringle domain maps to 24-101; it reads GCFWDNGHLY…EKRPCEDLRC (78 aa). 3 disulfides stabilise this stretch: C25/C101, C46/C82, and C70/C96. O-linked (GalNAc...) serine glycosylation occurs at S39. N66 carries N-linked (GlcNAc...) (complex) asparagine glycosylation. A helical transmembrane segment spans residues 169–189; that stretch reads LGYVLGITMMVIIIAIGAGII. Topologically, residues 190–263 are cytoplasmic; the sequence is LGYSYKRGKD…LMGQAGTPGA (74 aa). The segment covering 242–251 has biased composition (polar residues); it reads QTPVDPQEGT. The interval 242-263 is disordered; it reads QTPVDPQEGTTPLMGQAGTPGA.

N- and O-glycosylated. O-glycosylated with core 1 or possibly core 8 glycans. N-glycan heterogeneity at Asn-66: dHex1Hex5HexNAc4 (major) and dHex1Hex6HexNAc5 (minor).

It is found in the cell membrane. In terms of biological role, negative regulator of hepatic phosphatidylinositol 3-kinase (PI3K) activity. The polypeptide is Phosphoinositide-3-kinase-interacting protein 1 (PIK3IP1) (Homo sapiens (Human)).